We begin with the raw amino-acid sequence, 1073 residues long: MMRDRLASLIVVKQEGGSNTSISHHQATAIKCEASLYTESSLFQEINNNSCYRQNLNAPTHQQSHTSHLQHAQQHQTHQQHPLLPPPLPTLPLIYPCRNLFPDGCDINHLACCSSSNSNSNCNSDSNSTSSSPGNSHFFANGNTCAAALTPAPPATEPRKIKPLGAGKLKVGKTDSNSDSNSNCDSRAAAAASTSATSATSATTLAATAAATAAAAEAGGAASAAAAAKISQVRLTNQATTSMLLLQPNSSFSSLSPFDNFSTQTASTTTTTSASAAGHHQHHNHLLHQQHHNQQQQQQQQQQQQQQQQQQQEHLQQQHQQQLVSPQQHLLKSETLLSHEEDQLISNLTDSSVVSHSELFSDLFFPSDSNNSLLSPTTSGYPDNPAEDLTSSIENLTKLTCLRDKRLSSIPEQQLSSEQEQQLCLLSLRSSSDPAIALHAQQQQQQQQQQQQQQQQHQQQQQHLQLQLISPIGGPLSCGSSLPSFQETYSLKYNSSSGSSPQQASSSSTAAPTPTDQVLTLKMDEDCFPPLSGGWSASPPAPSQLQQLHTLQSQAQMSHPNSSNNSSNNAGNSHNNSGGYNYHGHFNAINASANLSPSSSASSLYEYNGVSAADNFYGQQQQQQQQSYQQHNYNSHNGERYSLPTFPTISELAAATAAVEAAAAATVGGPPPVRRASLPVQRTVSPAGSTAQSPKLAKITLNQRHSHAHAHALQLNSAPNSAASSPASADLQAGRLLQAPSQLCAVCGDTAACQHYGVRTCEGCKGFFKRTVQKGSKYVCLADKNCPVDKRRRNRCQFCRFQKCLVVGMVKEVVRTDSLKGRRGRLPSKPKSPQESPPSPPISLITALVRSHVDTTPDPSCLDYSHYEEQSMSEADKVQQFYQLLTSSVDVIKQFAEKIPGYFDLLPEDQELLFQSASLELFVLRLAYRARIDDTKLIFCNGTVLHRTQCLRSFGEWLNDIMEFSRSLHNLEIDISAFACLCALTLITERHGLREPKKVEQLQMKIIGSLRDHVTYNAEAQKKQHYFSRLLGKLPELRSLSVQGLQRIFYLKLEDLVPAPALIENMFVTTLPF.

Disordered regions lie at residues 55-87 (NLNA…LPPP), 150-185 (TPAP…SNCD), 263-326 (TQTA…LVSP), 437-458 (ALHA…QQHQ), 492-514 (KYNS…APTP), 529-579 (PPLS…NSGG), and 618-640 (GQQQ…NGER). 3 stretches are compositionally biased toward low complexity: residues 59 to 82 (PTHQ…QQHP), 175 to 185 (DSNSDSNSNCD), and 263 to 277 (TQTA…ASAA). The segment covering 279 to 291 (HHQHHNHLLHQQH) has biased composition (basic residues). Low complexity-rich tracts occupy residues 292–326 (HNQQ…LVSP), 441–458 (QQQQ…QQHQ), and 495–514 (SSSG…APTP). The segment covering 619–636 (QQQQQQQQSYQQHNYNSH) has biased composition (low complexity). A DNA-binding region (nuclear receptor) is located at residues 741 to 816 (SQLCAVCGDT…VGMVKEVVRT (76 aa)). NR C4-type zinc fingers lie at residues 744 to 764 (CAVC…CEGC) and 780 to 804 (CLAD…FQKC). The disordered stretch occupies residues 819–841 (LKGRRGRLPSKPKSPQESPPSPP). Positions 840 to 1070 (PPISLITALV…ALIENMFVTT (231 aa)) constitute an NR LBD domain.

This sequence belongs to the nuclear hormone receptor family. NR4 subfamily. Forms a heterodimer with USP. In terms of tissue distribution, ubiquitously expressed in preblastoderm embryos, specifically in central nervous system and intestinal tract. Highly expressed in third instar larval imaginal disks and brain complexes, but not in ovaries.

The protein resides in the nucleus. Binds to NGFI-B response elements. Plays an important role in late stages of epidermal metamorphosis. This is Probable nuclear hormone receptor HR38 (Hr38) from Drosophila melanogaster (Fruit fly).